The chain runs to 1177 residues: Dynein axonemal assembly factor 9 (1177 aa).

The disordered stretch occupies residues 1 to 27; sequence MDVYPPRRQGLPRARSPGGSSRGSPSV. Residues 11–27 show a composition bias toward low complexity; the sequence is LPRARSPGGSSRGSPSV.

Interacts with ARL3.

Its function is as follows. May act as an effector for ARL3. In Homo sapiens (Human), this protein is Dynein axonemal assembly factor 9.